The sequence spans 678 residues: Inositol-trisphosphate 3-kinase C (678 aa).

Disordered stretches follow at residues 26 to 128 and 151 to 300; these read LEAL…RRNS and DLQS…LDLS. A compositionally biased stretch (gly residues) spans 44–58; sequence PGAGGPTGRPEGGGP. 2 stretches are compositionally biased toward basic and acidic residues: residues 61–76 and 107–116; these read WIEE…RTDL and EKPRQNKELD. S160 carries the post-translational modification Phosphoserine. Basic and acidic residues-rich tracts occupy residues 173–196 and 220–236; these read ELDR…DNLR and SGKE…HDTD. A Nuclear export signal motif is present at residues 318 to 326; that stretch reads LCPVPRLII. Residues 328-380 are disordered; the sequence is PETPEPEAQPVGPQSRIEGGTGGFSSASSFDESEDDLVAGGGGTSDPEDRAGS. The residue at position 330 (T330) is a Phosphothreonine. S398 is modified (phosphoserine). ATP-binding positions include K426, 466–468, and D479; that span reads EDL. Substrate is bound by residues K481, 502–508, and 529–536; these read RKDMYEK and KPRYMQWR. A calmodulin-binding region spans residues 504–512; that stretch reads DMYEKMVAV. Residues K553 and D633 each coordinate ATP. K636 is a binding site for substrate.

The protein belongs to the inositol phosphokinase (IPK) family.

The protein localises to the nucleus. It is found in the cytoplasm. It catalyses the reaction 1D-myo-inositol 1,4,5-trisphosphate + ATP = 1D-myo-inositol 1,3,4,5-tetrakisphosphate + ADP + H(+). Activated by calcium/calmodulin. Inhibited by high concentrations of the substrate Ins(1,2,4)P3, and allosterically activated by the product Ins(1,3,4,5)P4. Functionally, catalyzes the phosphorylation of 1D-myo-inositol 1,4,5-trisphosphate (InsP3) into 1D-myo-inositol 1,3,4,5-tetrakisphosphate and participates to the regulation of calcium homeostasis. Can phosphorylate inositol 2,4,5-triphosphate to inositol 2,4,5,6-tetraphosphate. The protein is Inositol-trisphosphate 3-kinase C (Itpkc) of Mus musculus (Mouse).